The primary structure comprises 305 residues: Fe-S cluster assembly protein dre2 (305 aa).

The tract at residues 21–150 (DATQKRTLLL…EKPQYQEAAV (130 aa)) is N-terminal SAM-like domain. The tract at residues 151-195 (PLRFGLKKKNKVAPEPVKVESVGFVDNYDDDELIDEDDLLAEEDL) is linker. [2Fe-2S] cluster is bound by residues Cys205, Cys217, Cys220, and Cys222. The tract at residues 205 to 222 (CKPDIAKKRRRACKDCTC) is fe-S binding site A. [4Fe-4S] cluster contacts are provided by Cys268, Cys271, Cys279, and Cys282. Short sequence motifs (cx2C motif) lie at residues 268-271 (CNSC) and 279-282 (CEGC). Residues 268–282 (CNSCSLGDAFRCEGC) form a fe-S binding site B region.

This sequence belongs to the anamorsin family. In terms of assembly, monomer. Interacts with tah18. Interacts with mia40. The cofactor is [2Fe-2S] cluster. It depends on [4Fe-4S] cluster as a cofactor.

It is found in the cytoplasm. Its subcellular location is the mitochondrion intermembrane space. In terms of biological role, component of the cytosolic iron-sulfur (Fe-S) protein assembly (CIA) machinery required for the maturation of extramitochondrial Fe-S proteins. Part of an electron transfer chain functioning in an early step of cytosolic Fe-S biogenesis, facilitating the de novo assembly of a [4Fe-4S] cluster on the scaffold complex cfd1-nbp35. Electrons are transferred to dre2 from NADPH via the FAD- and FMN-containing protein tah18. Tah18-dre2 are also required for the assembly of the diferric tyrosyl radical cofactor of ribonucleotide reductase (RNR), probably by providing electrons for reduction during radical cofactor maturation in the catalytic small subunit rnr2. The sequence is that of Fe-S cluster assembly protein dre2 from Talaromyces marneffei (strain ATCC 18224 / CBS 334.59 / QM 7333) (Penicillium marneffei).